A 476-amino-acid chain; its full sequence is uncharacterized protein (476 aa).

The first 24 residues, 1-24 (MIRKSATGVIVALAVIWGGGTWYT), serve as a signal peptide directing secretion.

It to E.coli YdgA and H.influenzae HI_1236.

This is an uncharacterized protein from Escherichia coli (strain K12).